The sequence spans 69 residues: Conotoxin Eb6.22 (69 aa).

A signal peptide spans Val1–Ala17. Residues Glu18–Arg41 constitute a propeptide that is removed on maturation. 3 cysteine pairs are disulfide-bonded: Cys43-Cys57, Cys50-Cys61, and Cys56-Cys68.

Belongs to the conotoxin O1 superfamily. Expressed by the venom duct.

It localises to the secreted. The polypeptide is Conotoxin Eb6.22 (E1) (Conus ebraeus (Hebrew cone)).